The following is a 541-amino-acid chain: NADH-ubiquinone oxidoreductase chain 5 (541 aa).

16 helical membrane-spanning segments follow: residues 17–37, 48–70, 74–94, 98–118, 130–150, 157–177, 191–213, 226–246, 263–283, 285–305, 322–342, 353–373, 404–424, 429–449, 455–475, and 518–538; these read LLIFIIPISWNLLIKNILFAF, TIIHLLSSLNSSQVMIYSSYYMM, FVNRFMYMMLGFISSMVLLIM, GLSLMLGWDGLGITSYLLIMF, ITILSNRVGDVLILWSLGLMF, YMFLSYFSLSIMLLFILSSFT, AMAAPTPVSSLVHSSTLVTAGIY, GCFLLVVMGALTSFFSGLAAF, LGVMMFSLGLGLTLFCYFHLF, HALFKALLFMCSGVVIHSLGV, SYIILVCSLSLMGFPYLSGFF, SLCMLFPSVLMLVSCLLTSTY, LFVLYWGAVMGGYIFLLMFSG, IILGPLKSFLLLSLITVGVIL, SFSLSLSHYVSSMMFLPFITG, and FLTSSPYKVLILSSLLFTLFM.

It belongs to the complex I subunit 5 family.

Its subcellular location is the mitochondrion inner membrane. The enzyme catalyses a ubiquinone + NADH + 5 H(+)(in) = a ubiquinol + NAD(+) + 4 H(+)(out). In terms of biological role, core subunit of the mitochondrial membrane respiratory chain NADH dehydrogenase (Complex I) that is believed to belong to the minimal assembly required for catalysis. Complex I functions in the transfer of electrons from NADH to the respiratory chain. The immediate electron acceptor for the enzyme is believed to be ubiquinone. This is NADH-ubiquinone oxidoreductase chain 5 (ND5) from Artemia franciscana (Brine shrimp).